The primary structure comprises 340 residues: ATP-dependent 6-phosphofructokinase (340 aa).

G11 contacts ATP. 21-25 (RAVVR) contacts ADP. Residues 72 to 73 (RY) and 102 to 105 (GDGS) each bind ATP. Residue D103 coordinates Mg(2+). Substrate is bound at residue 125 to 127 (TID). The active-site Proton acceptor is the D127. R154 serves as a coordination point for ADP. Substrate is bound by residues R162 and 169-171 (MGR). ADP-binding positions include 185–187 (GAD) and 213–215 (KHH). Substrate-binding positions include E222, R244, and 250-253 (HLLR).

Belongs to the phosphofructokinase type A (PFKA) family. ATP-dependent PFK group I subfamily. Prokaryotic clade 'B1' sub-subfamily. In terms of assembly, homotetramer. Mg(2+) is required as a cofactor.

It is found in the cytoplasm. The enzyme catalyses beta-D-fructose 6-phosphate + ATP = beta-D-fructose 1,6-bisphosphate + ADP + H(+). It participates in carbohydrate degradation; glycolysis; D-glyceraldehyde 3-phosphate and glycerone phosphate from D-glucose: step 3/4. Allosterically activated by ADP and other diphosphonucleosides, and allosterically inhibited by phosphoenolpyruvate. Functionally, catalyzes the phosphorylation of D-fructose 6-phosphate to fructose 1,6-bisphosphate by ATP, the first committing step of glycolysis. The polypeptide is ATP-dependent 6-phosphofructokinase (Streptococcus agalactiae serotype Ia (strain ATCC 27591 / A909 / CDC SS700)).